The primary structure comprises 183 residues: ATP synthase subunit delta (183 aa).

The protein belongs to the ATPase delta chain family. F-type ATPases have 2 components, F(1) - the catalytic core - and F(0) - the membrane proton channel. F(1) has five subunits: alpha(3), beta(3), gamma(1), delta(1), epsilon(1). F(0) has three main subunits: a(1), b(2) and c(10-14). The alpha and beta chains form an alternating ring which encloses part of the gamma chain. F(1) is attached to F(0) by a central stalk formed by the gamma and epsilon chains, while a peripheral stalk is formed by the delta and b chains.

The protein resides in the cell inner membrane. Its function is as follows. F(1)F(0) ATP synthase produces ATP from ADP in the presence of a proton or sodium gradient. F-type ATPases consist of two structural domains, F(1) containing the extramembraneous catalytic core and F(0) containing the membrane proton channel, linked together by a central stalk and a peripheral stalk. During catalysis, ATP synthesis in the catalytic domain of F(1) is coupled via a rotary mechanism of the central stalk subunits to proton translocation. Functionally, this protein is part of the stalk that links CF(0) to CF(1). It either transmits conformational changes from CF(0) to CF(1) or is implicated in proton conduction. This chain is ATP synthase subunit delta, found in Nitratidesulfovibrio vulgaris (strain DSM 19637 / Miyazaki F) (Desulfovibrio vulgaris).